Consider the following 302-residue polypeptide: Glycine--tRNA ligase alpha subunit (302 aa).

Belongs to the class-II aminoacyl-tRNA synthetase family. Tetramer of two alpha and two beta subunits.

It is found in the cytoplasm. The enzyme catalyses tRNA(Gly) + glycine + ATP = glycyl-tRNA(Gly) + AMP + diphosphate. The sequence is that of Glycine--tRNA ligase alpha subunit from Xanthomonas axonopodis pv. citri (strain 306).